The chain runs to 149 residues: uncharacterized protein (149 aa).

This is an uncharacterized protein from Acanthamoeba polyphaga mimivirus (APMV).